We begin with the raw amino-acid sequence, 155 residues long: Ribosome maturation factor RimP (155 aa).

This sequence belongs to the RimP family.

Its subcellular location is the cytoplasm. Required for maturation of 30S ribosomal subunits. The chain is Ribosome maturation factor RimP from Listeria monocytogenes serovar 1/2a (strain ATCC BAA-679 / EGD-e).